Here is a 408-residue protein sequence, read N- to C-terminus: Chaperone protein dnaJ 1, mitochondrial (408 aa).

The N-terminal 26 residues, 1-26 (MRRFNWVLRHVQARRTFDSAIGLRQG), are a transit peptide targeting the mitochondrion. A J domain is found at 48–113 (NYYDVLGVSP…ERREEYDKLQ (66 aa)). Residues 173–247 (GCTKRLSFDA…CRGSGIVEGT (75 aa)) form a CR-type zinc finger. Cys-186, Cys-189, Cys-203, Cys-206, Cys-221, Cys-224, Cys-235, and Cys-238 together coordinate Zn(2+). CXXCXGXG motif repeat units follow at residues 186–193 (CDSCDGLG), 203–210 (CPTCRGVG), 221–228 (CQTCKGTG), and 235–242 (CMSCRGSG).

The protein belongs to the DnaJ family. B/II subfamily. As to quaternary structure, homodimer. It depends on Zn(2+) as a cofactor. In terms of tissue distribution, ubiquitous.

Its subcellular location is the mitochondrion. In terms of biological role, plays a continuous role in plant development probably in the structural organization of compartments. The protein is Chaperone protein dnaJ 1, mitochondrial (ATJ1) of Arabidopsis thaliana (Mouse-ear cress).